We begin with the raw amino-acid sequence, 215 residues long: Transcription factor LAX PANICLE 1 (215 aa).

Positions 1–48 are disordered; it reads MHDPRGFPIHPQPYHLHPTAGGLGEGRMRGGGRRRPGAKLSTDPQSVA. The segment at 40–53 is basic motif; degenerate; it reads LSTDPQSVAARERR. Positions 40–89 constitute a bHLH domain; that stretch reads LSTDPQSVAARERRHRISDRFRVLRSLVPGGSKMDTVSMLEQAIHYVKFL. The helix-loop-helix motif stretch occupies residues 54–89; it reads HRISDRFRVLRSLVPGGSKMDTVSMLEQAIHYVKFL.

It belongs to the bHLH protein family. As to quaternary structure, efficient DNA binding requires dimerization with another bHLH protein. Interacts with LAX2. As to expression, expressed in the boundary between the shoot apical meristem (SAM) and the region of new meristem formation.

Its subcellular location is the nucleus. Transcription factor that seems to regulate organogenesis in postembryonic development. Involved in the regulation of shoot branching by controlling axillary meristem initiation. Functions in association with LAX2 to regulate the process of AM formation. Possesses transactivation activity in yeast. This chain is Transcription factor LAX PANICLE 1, found in Oryza sativa subsp. japonica (Rice).